Reading from the N-terminus, the 201-residue chain is uncharacterized protein (201 aa).

The first 23 residues, 1-23, serve as a signal peptide directing secretion; sequence MKILYFIFVIIINILLILNHVKS. Residues 24 to 178 are Extracellular-facing; that stretch reads KYNTFIFENT…GNYGEDPQRN (155 aa). 2 N-linked (GlcNAc...) asparagine glycosylation sites follow: Asn114 and Asn134. The disordered stretch occupies residues 122–157; sequence TPETPSPTENAPNTSGGSSEGNHYTYKSSSSSSEHI. Polar residues predominate over residues 123–148; sequence PETPSPTENAPNTSGGSSEGNHYTYK. A helical membrane pass occupies residues 179–199; that stretch reads IGISLSSSLIFISILFLIIFI. The Cytoplasmic segment spans residues 200-201; the sequence is NN.

The protein localises to the membrane. This is an uncharacterized protein from Dictyostelium discoideum (Social amoeba).